The following is a 416-amino-acid chain: UDP-N-acetylglucosamine 1-carboxyvinyltransferase (416 aa).

A phosphoenolpyruvate-binding site is contributed by 22–23 (KN). R91 serves as a coordination point for UDP-N-acetyl-alpha-D-glucosamine. The active-site Proton donor is the C115. Residue C115 is modified to 2-(S-cysteinyl)pyruvic acid O-phosphothioketal. UDP-N-acetyl-alpha-D-glucosamine contacts are provided by residues 120–124 (RPIDL), D303, and I325.

It belongs to the EPSP synthase family. MurA subfamily.

The protein localises to the cytoplasm. The catalysed reaction is phosphoenolpyruvate + UDP-N-acetyl-alpha-D-glucosamine = UDP-N-acetyl-3-O-(1-carboxyvinyl)-alpha-D-glucosamine + phosphate. It participates in cell wall biogenesis; peptidoglycan biosynthesis. In terms of biological role, cell wall formation. Adds enolpyruvyl to UDP-N-acetylglucosamine. The chain is UDP-N-acetylglucosamine 1-carboxyvinyltransferase from Lawsonia intracellularis (strain PHE/MN1-00).